The sequence spans 1538 residues: Phenolphthiocerol/phthiocerol polyketide synthase subunit B (1538 aa).

In terms of domain architecture, Ketosynthase family 3 (KS3) spans 33 to 455 (AEPVAVVGIG…GTNAHVIIEQ (423 aa)). Active-site for beta-ketoacyl synthase activity residues include C205, H340, and H377. Residues 553-882 (DGSPGPGTVF…TNLYTADIAH (330 aa)) form an acyltransferase region. S649 functions as the For malonyltransferase activity in the catalytic mechanism. Residue 1153-1196 (SQLVIGATGNIGPHLIRQLARMGAKTIVAMARKPGALDELTQCL) participates in NADP(+) binding. A beta-ketoacyl reductase region spans residues 1153–1328 (SQLVIGATGN…TVVDWGLWKS (176 aa)). A Carrier domain is found at 1423 to 1498 (DMLFDHVGAL…SLTDYLATVL (76 aa)). S1458 carries the O-(pantetheine 4'-phosphoryl)serine modification.

Requires NADP(+) as cofactor. The cofactor is pantetheine 4'-phosphate.

The catalysed reaction is icosanoyl-[(phenol)carboxyphthiodiolenone synthase] + 2 (S)-methylmalonyl-CoA + 3 malonyl-CoA + 5 NADPH + 10 H(+) = C32-carboxyphthiodiolenone-[(phenol)carboxyphthiodiolenone synthase] + 5 CO2 + 5 NADP(+) + 5 CoA + 2 H2O. It carries out the reaction docosanoyl-[(phenol)carboxyphthiodiolenone synthase] + 2 (S)-methylmalonyl-CoA + 3 malonyl-CoA + 5 NADPH + 10 H(+) = C34-carboxyphthiodiolenone-[(phenol)carboxyphthiodiolenone synthase] + 5 CO2 + 5 NADP(+) + 5 CoA + 2 H2O. The enzyme catalyses 17-(4-hydroxyphenyl)heptadecanoyl-[(phenol)carboxyphthiodiolenone synthase] + 2 (S)-methylmalonyl-CoA + 3 malonyl-CoA + 5 NADPH + 10 H(+) = C35-(phenol)carboxyphthiodiolenone-[(phenol)carboxyphthiodiolenone synthase] + 5 CO2 + 5 NADP(+) + 5 CoA + 2 H2O. It catalyses the reaction 19-(4-hydroxyphenyl)nonadecanoyl-[(phenol)carboxyphthiodiolenone synthase] + 2 (S)-methylmalonyl-CoA + 3 malonyl-CoA + 5 NADPH + 10 H(+) = C37-(phenol)carboxyphthiodiolenone-[(phenol)carboxyphthiodiolenone synthase] + 5 CO2 + 5 NADP(+) + 5 CoA + 2 H2O. The protein operates within lipid metabolism; fatty acid biosynthesis. Part of the PpsABCDE complex involved in the biosynthesis of the lipid core common to phthiocerols and phenolphthiocerols by successive additions of malonyl-CoA or methylmalonyl-CoA extender units. PpsA can accept as substrate the activated forms of either icosanoyl (C20), docosanoyl (C22) or lignoceroyl (C24) groups from FadD26, or a (4-hydroxyphenyl)-C17 or (4-hydroxyphenyl)-C19 fatty acyl from FadD29. PpsA initiates the biosynthesis and extends its substrate using a malonyl-CoA extender unit. The PpsB and PpsC proteins add the second and third malonyl-CoA extender units. PpsD adds an (R)-methylmalonyl unit and PpsE adds a second (R)-methylmalonyl unit. The incorporation of the methylmalonyl units results in formation of two branched methyl groups in the elongated product. This chain is Phenolphthiocerol/phthiocerol polyketide synthase subunit B (ppsB), found in Mycobacterium tuberculosis (strain CDC 1551 / Oshkosh).